The chain runs to 642 residues: Acid beta-fructofuranosidase (642 aa).

The Cytoplasmic portion of the chain corresponds to methionine 1–glutamate 22. A propeptide spans methionine 1–glycine 95 (removed in mature form). A helical; Signal-anchor for type II membrane protein membrane pass occupies residues leucine 23 to isoleucine 43. Over alanine 44 to serine 642 the chain is Lumenal. N-linked (GlcNAc...) asparagine glycosylation occurs at asparagine 100. Residues tryptophan 119 to aspartate 122, glutamine 138, tryptophan 146, tryptophan 181 to threonine 182, and arginine 245 to aspartate 246 contribute to the substrate site. Aspartate 122 is a catalytic residue. N-linked (GlcNAc...) asparagine glycosylation is present at asparagine 267. Substrate contacts are provided by glutamate 300 and aspartate 333. Cysteine 490 and cysteine 538 are disulfide-bonded. 2 N-linked (GlcNAc...) asparagine glycosylation sites follow: asparagine 491 and asparagine 615.

The protein belongs to the glycosyl hydrolase 32 family. As to quaternary structure, may be present in two forms, a 70 kDa monomer and a heterodimer of the 30 kDa and 38 kDa subunits. The ratio of the levels of the two forms within cells appears to be regulated developmentally.

It localises to the membrane. The protein resides in the vacuole. The protein localises to the vacuole lumen. It catalyses the reaction Hydrolysis of terminal non-reducing beta-D-fructofuranoside residues in beta-D-fructofuranosides.. Its pathway is glycan biosynthesis; sucrose metabolism. The polypeptide is Acid beta-fructofuranosidase (VCINV) (Vicia faba (Broad bean)).